The chain runs to 244 residues: LexA repressor (244 aa).

Residues 1–24 (MSDSSDTTVDGASDGASDGASGAD) form a disordered region. Residues 10-24 (DGASDGASDGASGAD) are compositionally biased toward low complexity. A DNA-binding region (H-T-H motif) is located at residues 58–78 (IREIGDAVGLTSTSSVAHQLR). Residues Ser-168 and Lys-205 each act as for autocatalytic cleavage activity in the active site.

Belongs to the peptidase S24 family. As to quaternary structure, homodimer.

The enzyme catalyses Hydrolysis of Ala-|-Gly bond in repressor LexA.. Its function is as follows. Represses a number of genes involved in the response to DNA damage (SOS response), including recA and lexA. In the presence of single-stranded DNA, RecA interacts with LexA causing an autocatalytic cleavage which disrupts the DNA-binding part of LexA, leading to derepression of the SOS regulon and eventually DNA repair. This chain is LexA repressor, found in Mycobacterium ulcerans (strain Agy99).